We begin with the raw amino-acid sequence, 373 residues long: MENIVQSKPIIELRSLKKSYNENTIIDNFNLTINNGEFLTILGPSGCGKTTVLRLIAGFEEANGGQIILDGEDVTDLPAEHRPVNTVFQSYALFPHMTIFENVAFGLRMQKVPNEEIKPRVLEALRMVQLEEMADRKPTQLSGGQQQRIAIARAVVNKPKVLLLDESLSALDYKLRKQMQNELKALQRKLGITFIFVTHDQEEALTMSDRIIVLRKGNIEQDGSPREIYEEPSNLFVAKFIGEINIFDAQVLNRVDEKRVRANVEGRVCDIYTDLAVKEGQKLKVLLRPEDVQLEELDENEQSSAIIGHIRERNYKGMTLESTVELEHNNKLVLVSEFFNEDDPNIDHSLDQRVGVTWIEKWEVVLNDENDNA.

An ABC transporter domain is found at 11-241; sequence IELRSLKKSY…PSNLFVAKFI (231 aa). Residue 43-50 coordinates ATP; that stretch reads GPSGCGKT.

This sequence belongs to the ABC transporter superfamily. Spermidine/putrescine importer (TC 3.A.1.11.1) family. In terms of assembly, the complex is composed of two ATP-binding proteins (PotA), two transmembrane proteins (PotB and PotC) and a solute-binding protein (PotD).

It is found in the cell inner membrane. The catalysed reaction is ATP + H2O + polyamine-[polyamine-binding protein]Side 1 = ADP + phosphate + polyamineSide 2 + [polyamine-binding protein]Side 1.. Part of the ABC transporter complex PotABCD involved in spermidine/putrescine import. Responsible for energy coupling to the transport system. The polypeptide is Spermidine/putrescine import ATP-binding protein PotA (Mannheimia succiniciproducens (strain KCTC 0769BP / MBEL55E)).